The chain runs to 646 residues: Serine/threonine-protein kinase max-2 (646 aa).

The segment at 19-40 (FSPSDKDKDRDDEMKPSSSAMD) is disordered. The segment covering 22-33 (SDKDKDRDDEMK) has biased composition (basic and acidic residues). A CRIB domain is found at 41–54 (ISQPYNTVHRVHVG). A disordered region spans residues 136–345 (LQCSNGSATS…PPPPEEPPVR (210 aa)). Composition is skewed to low complexity over residues 142 to 157 (SATSPSTSVSASSSSA) and 167 to 180 (LSTASSTDTSLSLS). Residues 196–205 (SAPQLKTFTG) are compositionally biased toward polar residues. Positions 214–223 (SPFPPQPPVL) are enriched in pro residues. Positions 229 to 245 (TASAVATTTTNPTTSNG) are enriched in low complexity. The span at 246-262 (APPPVPGSKGPPVPPKP) shows a compositional bias: pro residues. Composition is skewed to low complexity over residues 273–307 (SSGCSSPQQYSSARSVGNSLSNGSVVSTTSSDGDV) and 323–334 (KNGNTTTNKTTV). In terms of domain architecture, Protein kinase spans 376 to 627 (YEMKKQIGVG…TTELLAHPFL (252 aa)). ATP-binding positions include 382 to 390 (IGVGASGTV) and lysine 405. The active-site Proton acceptor is aspartate 496.

It belongs to the protein kinase superfamily. STE Ser/Thr protein kinase family. STE20 subfamily. In terms of assembly, interacts with mlk-1; the interaction is independent of max-2 and mlk-1 kinase activities. Interacts with mig-2 (GTP-bound form). Mg(2+) is required as a cofactor.

It is found in the perikaryon. It localises to the cell projection. Its subcellular location is the dendrite. The protein resides in the cytoplasm. It catalyses the reaction L-seryl-[protein] + ATP = O-phospho-L-seryl-[protein] + ADP + H(+). The catalysed reaction is L-threonyl-[protein] + ATP = O-phospho-L-threonyl-[protein] + ADP + H(+). Serine/threonine-protein kinase, which phosphorylates mlk-1. Involved in the stress response to heavy metals by activating the mlk-1/mek-1/kgb-1 pathway. In ventral cord commissural motoneurons, required for dorsal axon guidance downstream of unc-6/netrin repulsion receptor unc-5 and probably of Rho GTPases ced-10 and mig-2. Plays a redundant role with mig-10 in orientating axonal growth of HSN neurons. Plays a redundant role with pak-1 in P neuroblast migration and in distal tip cell (DTC)-mediated guidance of gonad elongation probably downstream of Rho GTPases. In association with pak-2, plays a role in embryogenesis. In association with pak-1, may be involved in spermatogenesis. In Caenorhabditis elegans, this protein is Serine/threonine-protein kinase max-2.